The chain runs to 176 residues: Telomerase RNA component interacting RNase (176 aa).

Over residues 1–12 the composition is skewed to basic and acidic residues; the sequence is MAARGRRAEPQG. A disordered region spans residues 1 to 121; sequence MAARGRRAEP…TLSFVGKRRG (121 aa). A compositionally biased stretch (low complexity) spans 45-56; the sequence is SGAGSSPVSGGV. The segment covering 68 to 83 has biased composition (basic and acidic residues); it reads LFKRKMEEEQRQRQEE. Residues 90–101 show a composition bias toward low complexity; the sequence is RPDQSAAAAGPG. Residue Lys146 is modified to N6-acetyllysine.

As to quaternary structure, part of the telomerase RNA 3' end complex which contains about 488 proteins.

Its activity is regulated as follows. Zn(2+) inhibits the RNase activity while Mg(2+), Ca(2+), Mn(2+), K(+), Na(+), EDTA and EGTA show little effect on the exoribonuclease activity. Its function is as follows. Exoribonuclease that is part of the telomerase RNA 3' end processing complex and which has the ability to cleave all four unpaired RNA nucleotides from the 5' end or 3' end with higher efficiency for purine bases. This is Telomerase RNA component interacting RNase from Homo sapiens (Human).